Consider the following 671-residue polypeptide: UvrABC system protein B (671 aa).

The Helicase ATP-binding domain maps to Lys35–Arg423. Gly48–Thr55 lines the ATP pocket. A Beta-hairpin motif is present at residues Asn101 to Gln124. Residues Gln440–Ile602 form the Helicase C-terminal domain. The region spanning Gln632–Glu667 is the UVR domain.

Belongs to the UvrB family. In terms of assembly, forms a heterotetramer with UvrA during the search for lesions. Interacts with UvrC in an incision complex.

It localises to the cytoplasm. The UvrABC repair system catalyzes the recognition and processing of DNA lesions. A damage recognition complex composed of 2 UvrA and 2 UvrB subunits scans DNA for abnormalities. Upon binding of the UvrA(2)B(2) complex to a putative damaged site, the DNA wraps around one UvrB monomer. DNA wrap is dependent on ATP binding by UvrB and probably causes local melting of the DNA helix, facilitating insertion of UvrB beta-hairpin between the DNA strands. Then UvrB probes one DNA strand for the presence of a lesion. If a lesion is found the UvrA subunits dissociate and the UvrB-DNA preincision complex is formed. This complex is subsequently bound by UvrC and the second UvrB is released. If no lesion is found, the DNA wraps around the other UvrB subunit that will check the other stand for damage. The sequence is that of UvrABC system protein B from Mycoplasma mycoides subsp. mycoides SC (strain CCUG 32753 / NCTC 10114 / PG1).